The sequence spans 362 residues: Hepatic sodium/bile acid cotransporter (362 aa).

At Met-1 to Ala-22 the chain is on the extracellular side. Residues Asn-5 and Asn-11 are each glycosylated (N-linked (GlcNAc...) asparagine). Residues Thr-23–Cys-44 traverse the membrane as a helical segment. At Thr-45 to Glu-47 the chain is on the cytoplasmic side. The chain crosses the membrane as a helical span at residues Phe-48–Phe-83. The Extracellular segment spans residues His-84–Ser-86. Residues Asn-87–Met-112 form a discontinuously helical membrane-spanning segment. The Cytoplasmic segment spans residues Lys-113–Asp-115. Residues Met-116 to Ser-142 form a helical membrane-spanning segment. Over Lys-143–Tyr-156 the chain is Extracellular. A helical transmembrane segment spans residues Lys-157–Lys-179. The Cytoplasmic segment spans residues Arg-180–Tyr-183. The helical transmembrane segment at Val-184–Val-217 threads the bilayer. Residues Met-218 to Thr-219 are Extracellular-facing. A helical transmembrane segment spans residues Pro-220 to Leu-243. Topologically, residues Phe-244 to Asn-247 are cytoplasmic. Residues Pro-248 to Thr-273 traverse the membrane as a discontinuously helical segment. Topologically, residues Phe-274–Gly-280 are extracellular. A helical membrane pass occupies residues Pro-281 to Lys-311. Residues Pro-312–Asn-362 are Cytoplasmic-facing. Thr-330 carries the post-translational modification Phosphothreonine. Residues Ala-333–Asn-362 are disordered. Positions Asn-353–Asn-362 are enriched in polar residues.

Belongs to the bile acid:sodium symporter (BASS) (TC 2.A.28) family. Highly expressed in liver and low expression in kidney.

It localises to the cell membrane. It carries out the reaction taurocholate(out) + 2 Na(+)(out) = taurocholate(in) + 2 Na(+)(in). The catalysed reaction is taurochenodeoxycholate(out) + 2 Na(+)(out) = taurochenodeoxycholate(in) + 2 Na(+)(in). It catalyses the reaction tauroursodeoxycholate(out) + 2 Na(+)(out) = tauroursodeoxycholate(in) + 2 Na(+)(in). The enzyme catalyses glycocholate(out) + 2 Na(+)(out) = glycocholate(in) + 2 Na(+)(in). It carries out the reaction estrone 3-sulfate(out) + 2 Na(+)(out) = estrone 3-sulfate(in) + 2 Na(+)(in). The catalysed reaction is cholate(out) + 2 Na(+)(out) = cholate(in) + 2 Na(+)(in). It catalyses the reaction tauronorcholate(out) + 2 Na(+)(out) = tauronorcholate(in) + 2 Na(+)(in). The enzyme catalyses taurodeoxycholate(out) + 2 Na(+)(out) = taurodeoxycholate(in) + 2 Na(+)(in). It carries out the reaction tauroallocholate(out) + 2 Na(+)(out) = tauroallocholate(in) + 2 Na(+)(in). The catalysed reaction is taurohyodeoxycholate(out) + 2 Na(+)(out) = taurohyodeoxycholate(in) + 2 Na(+)(in). It catalyses the reaction taurohyocholate(out) + 2 Na(+)(out) = taurohyocholate(in) + 2 Na(+)(in). The enzyme catalyses tauro-beta-muricholate(out) + 2 Na(+)(out) = tauro-beta-muricholate(in) + 2 Na(+)(in). The transport of bile acids is sodium-dependent. In terms of biological role, as a major transporter of conjugated bile salts from plasma into the hepatocyte, it plays a key role in the enterohepatic circulation of bile salts necessary for the solubilization and absorption of dietary fat and fat-soluble vitamins. It is strictly dependent on the extracellular presence of sodium. It exhibits broad substrate specificity and transports various bile acids, such as taurocholate, cholate, as well as non-bile acid organic compounds, such as estrone sulfate. Works collaboratively with the ileal transporter (NTCP2), the organic solute transporter (OST), and the bile salt export pump (BSEP), to ensure efficacious biological recycling of bile acids during enterohepatic circulation. The polypeptide is Hepatic sodium/bile acid cotransporter (Slc10a1) (Rattus norvegicus (Rat)).